The following is a 195-amino-acid chain: HTH-type transcriptional regulator BetI (195 aa).

The 61-residue stretch at E8–L68 folds into the HTH tetR-type domain. The H-T-H motif DNA-binding region spans T31 to F50.

It functions in the pathway amine and polyamine biosynthesis; betaine biosynthesis via choline pathway [regulation]. In terms of biological role, repressor involved in the biosynthesis of the osmoprotectant glycine betaine. It represses transcription of the choline transporter BetT and the genes of BetAB involved in the synthesis of glycine betaine. This is HTH-type transcriptional regulator BetI from Burkholderia mallei (strain NCTC 10247).